Reading from the N-terminus, the 373-residue chain is SWI/SNF-related matrix-associated actin-dependent regulator of chromatin subfamily B member 1-A (373 aa).

Residues Met1–Ser101 are DNA-binding.

It belongs to the SNF5 family. As to quaternary structure, component of the multiprotein chromatin-remodeling complexes SWI/SNF. Component of neural progenitors-specific chromatin remodeling complex (npBAF complex) and the neuron-specific chromatin remodeling complex (nBAF complex). Component of the BAF (SWI/SNF) chromatin remodeling complex. Component of the SWI/SNF-B (PBAF) chromatin remodeling complex. Binds to double-stranded DNA.

It localises to the nucleus. Involved in chromatin-remodeling. Core component of the BAF (SWI/SNF) complex. This ATP-dependent chromatin-remodeling complex plays important roles in cell proliferation and differentiation, in cellular antiviral activities and inhibition of tumor formation. Belongs to the neural progenitors-specific chromatin remodeling complex (npBAF complex) and the neuron-specific chromatin remodeling complex (nBAF complex) and may play a role in neural development. The protein is SWI/SNF-related matrix-associated actin-dependent regulator of chromatin subfamily B member 1-A (smarcb1a) of Danio rerio (Zebrafish).